Reading from the N-terminus, the 192-residue chain is dTTP/UTP pyrophosphatase (192 aa).

Asp-70 serves as the catalytic Proton acceptor.

This sequence belongs to the Maf family. YhdE subfamily. The cofactor is a divalent metal cation.

The protein localises to the cytoplasm. The enzyme catalyses dTTP + H2O = dTMP + diphosphate + H(+). It carries out the reaction UTP + H2O = UMP + diphosphate + H(+). In terms of biological role, nucleoside triphosphate pyrophosphatase that hydrolyzes dTTP and UTP. May have a dual role in cell division arrest and in preventing the incorporation of modified nucleotides into cellular nucleic acids. This Alkaliphilus oremlandii (strain OhILAs) (Clostridium oremlandii (strain OhILAs)) protein is dTTP/UTP pyrophosphatase.